We begin with the raw amino-acid sequence, 208 residues long: Platelet-activating factor receptor (208 aa).

Residues 1–16 lie on the Extracellular side of the membrane; sequence MEPHDSSHVDSEFRYT. A helical transmembrane segment spans residues 17 to 38; that stretch reads LFPIVYSIIFVLGVIANGYVLW. The Cytoplasmic segment spans residues 39-54; the sequence is VFARLYPSKKFNEIKI. The chain crosses the membrane as a helical span at residues 55–74; sequence FMVNLTMADMLFLITLPLWI. The Extracellular portion of the chain corresponds to 75–91; it reads VYYQNGGNWIFPKFLCN. C90 and C173 are oxidised to a cystine. The helical transmembrane segment at 92 to 113 threads the bilayer; sequence LAGCLFFINTYCSVAFLGVITY. Over 114–133 the chain is Cytoplasmic; it reads NRFQAVTRPIKTAQANTRKR. A helical membrane pass occupies residues 134-155; sequence GISLSLVIWVAIVGAASYFFIL. Topologically, residues 156-184 are extracellular; it reads DSTNTVPNSAGSGNITRCFEHYEKGSVPV. N169 carries an N-linked (GlcNAc...) asparagine glycan. Residues 185 to 205 form a helical membrane-spanning segment; the sequence is LIIHIFIVFSFFLVFLIILFC. Residues 206–208 are Cytoplasmic-facing; that stretch reads NLV.

It belongs to the G-protein coupled receptor 1 family. In terms of assembly, interacts with ARRB1.

The protein resides in the cell membrane. Functionally, receptor for platelet activating factor, a chemotactic phospholipid mediator that possesses potent inflammatory, smooth-muscle contractile and hypotensive activity. Seems to mediate its action via a G protein that activates a phosphatidylinositol-calcium second messenger system. The protein is Platelet-activating factor receptor (PTAFR) of Macaca mulatta (Rhesus macaque).